Here is a 255-residue protein sequence, read N- to C-terminus: Adenosylcobinamide-GDP ribazoletransferase (255 aa).

The next 7 membrane-spanning stretches (helical) occupy residues 33–53, 57–77, 107–127, 136–156, 174–194, 196–216, and 234–254; these read IFLP…IELF, FPGF…SGAL, VGSM…GSYA, FTVL…IYSF, AGLI…AAFF, FSLI…FVVA, and IMEL…NIGV.

The protein belongs to the CobS family. It depends on Mg(2+) as a cofactor.

It localises to the cell membrane. It catalyses the reaction alpha-ribazole + adenosylcob(III)inamide-GDP = adenosylcob(III)alamin + GMP + H(+). The catalysed reaction is alpha-ribazole 5'-phosphate + adenosylcob(III)inamide-GDP = adenosylcob(III)alamin 5'-phosphate + GMP + H(+). Its pathway is cofactor biosynthesis; adenosylcobalamin biosynthesis; adenosylcobalamin from cob(II)yrinate a,c-diamide: step 7/7. Functionally, joins adenosylcobinamide-GDP and alpha-ribazole to generate adenosylcobalamin (Ado-cobalamin). Also synthesizes adenosylcobalamin 5'-phosphate from adenosylcobinamide-GDP and alpha-ribazole 5'-phosphate. This chain is Adenosylcobinamide-GDP ribazoletransferase, found in Carboxydothermus hydrogenoformans (strain ATCC BAA-161 / DSM 6008 / Z-2901).